Here is a 729-residue protein sequence, read N- to C-terminus: MGGFLPKAEGPGSQLQKLLPSFLVREQDWDQHLDKLHMLQQKRILESPLLRASKENDLSVLRQLLLDCTCDVRQRGALGETALHIAALYDNLEAALVLMEAAPELVFEPTTCEAFAGQTALHIAVVNQNVNLVRALLTRRASVSARATGTAFRHSPRNLIYFGEHPLSFAACVNSEEIVRLLIEHGADIRAQDSLGNTVLHILILQPNKTFACQMYNLLLSYDGHGDHLQPLDLVPNHQGLTPFKLAGVEGNTVMFQHLMQKRRHIQWTYGPLTSILYDLTEIDSWGEELSFLELVVSSDKREARQILEQTPVKELVSFKWNKYGRPYFCILAALYLLYMICFTTCCVYRPLKFRGGNRTHSRDITILQQKLLQEAYETREDIIRLVGELVSIVGAVIILLLEIPDIFRVGASRYFGKTILGGPFHVIIITYASLVLVTMVMRLTNTNGEVVPMSFALVLGWCSVMYFTRGFQMLGPFTIMIQKMIFGDLMRFCWLMAVVILGFASAFYIIFQTEDPTSLGQFYDYPMALFTTFELFLTVIDAPANYDVDLPFMFSIVNFAFTIIATLLMLNLFIAMMGDTHWRVAQERDELWRAQVVATTVMLERKLPRCLWPRSGICGCEFGLGDRWFLRVENHNDQNPLRVLRYVEVFKNSDKEDDQEHPSEKQPSGAESGTLARASLALPTSSLSRTASQSSSHRGWEILRQNTLGHLNLGLNLSEGDGEEVYHF.

At 1–327 (MGGFLPKAEG…SFKWNKYGRP (327 aa)) the chain is on the cytoplasmic side. ANK repeat units lie at residues 44 to 74 (ILES…DVRQ), 78 to 107 (LGET…ELVF), 116 to 145 (AGQT…SVSA), 162 to 191 (FGEH…DIRA), 195 to 228 (LGNT…HGDH), and 239 to 268 (QGLT…HIQW). Residues 328 to 348 (YFCILAALYLLYMICFTTCCV) traverse the membrane as a helical segment. The Extracellular segment spans residues 349-385 (YRPLKFRGGNRTHSRDITILQQKLLQEAYETREDIIR). Asparagine 358 is a glycosylation site (N-linked (GlcNAc...) asparagine). The helical transmembrane segment at 386-408 (LVGELVSIVGAVIILLLEIPDIF) threads the bilayer. Residues 409–419 (RVGASRYFGKT) lie on the Cytoplasmic side of the membrane. The chain crosses the membrane as a helical span at residues 420-442 (ILGGPFHVIIITYASLVLVTMVM). Topologically, residues 443–448 (RLTNTN) are extracellular. The helical transmembrane segment at 449–469 (GEVVPMSFALVLGWCSVMYFT) threads the bilayer. At 470–492 (RGFQMLGPFTIMIQKMIFGDLMR) the chain is on the cytoplasmic side. The chain crosses the membrane as a helical span at residues 493 to 513 (FCWLMAVVILGFASAFYIIFQ). Residues 524–544 (YDYPMALFTTFELFLTVIDAP) constitute an intramembrane region (pore-forming). Residue aspartate 542 coordinates Ca(2+). Residues 557-577 (IVNFAFTIIATLLMLNLFIAM) form a helical membrane-spanning segment. The Cytoplasmic segment spans residues 578–729 (MGDTHWRVAQ…EGDGEEVYHF (152 aa)). The segment at 598 to 602 (VATTV) is interaction with S100A10. The tract at residues 650-653 (VFKN) is involved in Ca(2+)-dependent inactivation. Positions 654-665 (SDKEDDQEHPSE) are enriched in basic and acidic residues. The segment at 654 to 675 (SDKEDDQEHPSEKQPSGAESGT) is disordered. Threonine 685 carries the phosphothreonine modification. Phosphoserine is present on serine 689. An involved in Ca(2+)-dependent inactivation region spans residues 700 to 729 (GWEILRQNTLGHLNLGLNLSEGDGEEVYHF).

Belongs to the transient receptor (TC 1.A.4) family. TrpV subfamily. TRPV5 sub-subfamily. In terms of assembly, homotetramer and probably heterotetramer with TRPV6. Interacts with TRPV6. Interacts with S100A10 and probably with the ANAX2-S100A10 heterotetramer. The interaction with S100A10 is required for the trafficking to the plasma membrane. Interacts with calmodulin. Interacts with BSPRY, which results in its inactivation. Post-translationally, glycosylated. In terms of tissue distribution, expressed at high levels in kidney, small intestine and pancreas, and at lower levels in testis, prostate, placenta, brain, colon and rectum.

Its subcellular location is the apical cell membrane. The enzyme catalyses Ca(2+)(in) = Ca(2+)(out). Activated by WNK3. Its function is as follows. Constitutively active calcium selective cation channel thought to be involved in Ca(2+) reabsorption in kidney and intestine. Required for normal Ca(2+) reabsorption in the kidney distal convoluted tubules. The channel is activated by low internal calcium level and the current exhibits an inward rectification. A Ca(2+)-dependent feedback regulation includes fast channel inactivation and slow current decay. Heteromeric assembly with TRPV6 seems to modify channel properties. TRPV5-TRPV6 heteromultimeric concatemers exhibit voltage-dependent gating. The polypeptide is Transient receptor potential cation channel subfamily V member 5 (TRPV5) (Homo sapiens (Human)).